We begin with the raw amino-acid sequence, 113 residues long: DNA-directed RNA polymerase subunit omega (113 aa).

This sequence belongs to the RNA polymerase subunit omega family. The RNAP catalytic core consists of 2 alpha, 1 beta, 1 beta' and 1 omega subunit. When a sigma factor is associated with the core the holoenzyme is formed, which can initiate transcription.

It catalyses the reaction RNA(n) + a ribonucleoside 5'-triphosphate = RNA(n+1) + diphosphate. In terms of biological role, promotes RNA polymerase assembly. Latches the N- and C-terminal regions of the beta' subunit thereby facilitating its interaction with the beta and alpha subunits. This is DNA-directed RNA polymerase subunit omega from Rhizorhabdus wittichii (strain DSM 6014 / CCUG 31198 / JCM 15750 / NBRC 105917 / EY 4224 / RW1) (Sphingomonas wittichii).